A 669-amino-acid chain; its full sequence is Protein real-time (669 aa).

In terms of domain architecture, PRELI/MSF1 spans 3–175 (QKFQSPVRVY…FINQLEQEGV (173 aa)). In terms of domain architecture, CRAL-TRIO spans 284 to 460 (EPAVVVEHFP…FLGGPCKTMI (177 aa)). One can recognise a GOLD domain in the interval 522 to 641 (HQNLYKSVDL…QLNLFYEVLS (120 aa)).

It is found in the mitochondrion. This is Protein real-time from Drosophila pseudoobscura pseudoobscura (Fruit fly).